Consider the following 180-residue polypeptide: UPF0149 protein XAC3406 (180 aa).

This sequence belongs to the UPF0149 family.

This Xanthomonas axonopodis pv. citri (strain 306) protein is UPF0149 protein XAC3406.